The following is a 466-amino-acid chain: Fumarate hydratase class II (466 aa).

Substrate contacts are provided by residues 100 to 102 (SGT), arginine 128, 131 to 134 (HPND), 141 to 143 (SSN), and threonine 189. The segment covering 122-137 (GERGERRKVHPNDDVN) has biased composition (basic and acidic residues). Residues 122-143 (GERGERRKVHPNDDVNKGQSSN) are disordered. The Proton donor/acceptor role is filled by histidine 190. Serine 320 is an active-site residue. Substrate-binding positions include serine 321 and 326–328 (KVN).

Belongs to the class-II fumarase/aspartase family. Fumarase subfamily. Homotetramer.

Its subcellular location is the cytoplasm. It catalyses the reaction (S)-malate = fumarate + H2O. It participates in carbohydrate metabolism; tricarboxylic acid cycle; (S)-malate from fumarate: step 1/1. In terms of biological role, involved in the TCA cycle. Catalyzes the stereospecific interconversion of fumarate to L-malate. This Myxococcus xanthus (strain DK1622) protein is Fumarate hydratase class II.